Reading from the N-terminus, the 1024-residue chain is Protein sumv-1 (1024 aa).

Disordered stretches follow at residues 447–486, 501–564, 577–617, 645–664, 710–739, and 773–1024; these read DASQ…KKMP, NFQG…RRGV, PSRH…RSQA, SQMA…GSPQ, VRSG…DTVQ, and AGNS…EEEL. Polar residues-rich tracts occupy residues 467 to 486, 501 to 514, and 528 to 542; these read SFGT…KKMP, NFQG…SSAT, and RSQQ…QTQD. Residues 584–600 are compositionally biased toward low complexity; that stretch reads SPLTPSTSTSSSQLLAP. The span at 605-617 shows a compositional bias: polar residues; that stretch reads QPGTSSQTFRSQA. 2 stretches are compositionally biased toward low complexity: residues 710–730 and 784–809; these read VRSG…ASGS and AGAP…ASTS. Residues 810-832 are compositionally biased toward polar residues; the sequence is VPEPTKSSESSVDPQSDVSFSNP. The span at 859–870 shows a compositional bias: low complexity; sequence TLASESTSSEAT. Polar residues predominate over residues 873–883; the sequence is HDTTSSSSAET. The span at 903–914 shows a compositional bias: basic and acidic residues; it reads PEKEKEKIDRPK. 3 stretches are compositionally biased toward low complexity: residues 916 to 943, 952 to 962, and 970 to 986; these read PKSS…NQAI, SASTSSSAAST, and LLAE…QQQA. Polar residues predominate over residues 987-998; it reads IGSTSKNGGSTK.

It is found in the nucleus. Its subcellular location is the cytoplasm. It localises to the cell projection. The protein resides in the axon. Nuclear factor that influences the activity of genes involved in vulval development. This is Protein sumv-1 from Caenorhabditis elegans.